The primary structure comprises 201 residues: Ras-related protein Rab-1B (201 aa).

At methionine 1 the chain carries N-acetylmethionine. Residues serine 17, glycine 18, valine 19, glycine 20, lysine 21, serine 22, cysteine 23, tyrosine 33, threonine 34, glutamate 35, serine 36, serine 39, and threonine 40 each contribute to the GTP site. A Mg(2+)-binding site is contributed by serine 22. Residues 30 to 45 (DDTYTESYISTIGVDF) carry the Switch 1 motif. 2 residues coordinate Mg(2+): threonine 40 and aspartate 63. The segment at 64–83 (TAGQERFRTITSSYYRGAHG) is switch 2 region; Required for interaction with REP1/CHM. A Switch 2 motif is present at residues 65–80 (AGQERFRTITSSYYRG). Residues glycine 66, asparagine 121, lysine 122, aspartate 124, serine 151, alanine 152, and lysine 153 each coordinate GTP. Positions 173-201 (MGPGAASGGERPNLKIDSTPVKQAGGGCC) are disordered. S-geranylgeranyl cysteine attachment occurs at residues cysteine 200 and cysteine 201. Cysteine 201 is modified (cysteine methyl ester).

This sequence belongs to the small GTPase superfamily. Rab family. In terms of assembly, interacts with MICAL1 and MICAL2. Interacts (in GTP-bound form) with MICALCL, MICAL1 and MILCAL3. Interacts with GDI1; the interaction requires the GDP-bound state. Interacts with CHM/REP1; the interaction requires the GDP-bound form and is necessary for prenylation by GGTase II. Interacts with RabGAP TBC1D20. Interacts (in GDP-bound form) with lipid phosphatase MTMR6 (via GRAM domain); the interaction regulates MTMR6 recruitment to the endoplasmic reticulum-Golgi intermediate compartment. Interacts (in GDP-bound form) with lipid phosphatase MTMR7. The cofactor is Mg(2+). Prenylated; by GGTase II, only after interaction of the substrate with Rab escort protein 1 (REP1).

The protein localises to the cytoplasm. It is found in the membrane. Its subcellular location is the preautophagosomal structure membrane. It localises to the perinuclear region. The enzyme catalyses GTP + H2O = GDP + phosphate + H(+). Its activity is regulated as follows. Regulated by guanine nucleotide exchange factors (GEFs) which promote the exchange of bound GDP for free GTP. Regulated by GTPase activating proteins (GAPs) including TBC1D20 which increases the GTP hydrolysis activity. Inhibited by GDP dissociation inhibitors (GDIs). Functionally, the small GTPases Rab are key regulators of intracellular membrane trafficking, from the formation of transport vesicles to their fusion with membranes. Rabs cycle between an inactive GDP-bound form and an active GTP-bound form that is able to recruit to membranes different set of downstream effectors directly responsible for vesicle formation, movement, tethering and fusion. Plays a role in the initial events of the autophagic vacuole development which take place at specialized regions of the endoplasmic reticulum. Regulates vesicular transport between the endoplasmic reticulum and successive Golgi compartments. Required to modulate the compacted morphology of the Golgi. Promotes the recruitment of lipid phosphatase MTMR6 to the endoplasmic reticulum-Golgi intermediate compartment. The polypeptide is Ras-related protein Rab-1B (RAB1B) (Bos taurus (Bovine)).